The following is a 213-amino-acid chain: MDARILQDNDDTSLPVNQASVTRIHKKPGKAEAEAAVRTLLLWAGEDPDREGLLETPKRVAKAYQELFGGYSESPEEVLGTTFEEVAGYDDMVLVKDISFFSHCEHHMVPIIGKAHVAYLPEGRVVGLSKIARVVDIFARRLQTQESITAQIADSMQRILKPRGVAVMIEAEHMCMAMRSIRKQGSSTITTTFTGDFKEKADQQVRFMTLIRT.

3 residues coordinate Zn(2+): C104, H107, and C175.

This sequence belongs to the GTP cyclohydrolase I family. In terms of assembly, homomer.

It catalyses the reaction GTP + H2O = 7,8-dihydroneopterin 3'-triphosphate + formate + H(+). Its pathway is cofactor biosynthesis; 7,8-dihydroneopterin triphosphate biosynthesis; 7,8-dihydroneopterin triphosphate from GTP: step 1/1. The polypeptide is GTP cyclohydrolase 1 (Brucella canis (strain ATCC 23365 / NCTC 10854 / RM-666)).